A 347-amino-acid chain; its full sequence is D-alanine--D-alanine ligase (347 aa).

An ATP-grasp domain is found at 131 to 333 (KRVLESAGIA…YPELIERLVD (203 aa)). ATP is bound at residue 161–216 (EEKLAYPVFTKPSNMGSSVGISKSENQEELRQALKLAFRYDSRVLVEQGVNAREIE). 3 residues coordinate Mg(2+): aspartate 287, glutamate 300, and asparagine 302.

Belongs to the D-alanine--D-alanine ligase family. Requires Mg(2+) as cofactor. It depends on Mn(2+) as a cofactor.

Its subcellular location is the cytoplasm. It catalyses the reaction 2 D-alanine + ATP = D-alanyl-D-alanine + ADP + phosphate + H(+). It participates in cell wall biogenesis; peptidoglycan biosynthesis. Functionally, cell wall formation. In Streptococcus pneumoniae serotype 19F (strain G54), this protein is D-alanine--D-alanine ligase.